We begin with the raw amino-acid sequence, 67 residues long: Preprofallaxidin-4 (67 aa).

An N-terminal signal peptide occupies residues 1-22 (MASLKKFLFLVLFLGMVSLSIC). The propeptide occupies 23-46 (DKEKREGENEEEEEEHEEESEEKR). Positions 24-48 (KEKREGENEEEEEEHEEESEEKRGL) are disordered. Acidic residues predominate over residues 30-42 (ENEEEEEEHEEES).

It belongs to the frog skin active peptide (FSAP) family. Dermaseptin subfamily. In terms of tissue distribution, expressed by the skin glands.

The protein localises to the secreted. The protein is Preprofallaxidin-4 of Litoria fallax (Eastern dwarf tree frog).